Consider the following 286-residue polypeptide: NAD kinase (286 aa).

Residue aspartate 74 is the Proton acceptor of the active site. Residues 74 to 75 (DG), 148 to 149 (ND), aspartate 178, alanine 186, 189 to 194 (TAYNLS), and glutamine 244 each bind NAD(+).

It belongs to the NAD kinase family. A divalent metal cation is required as a cofactor.

It localises to the cytoplasm. The catalysed reaction is NAD(+) + ATP = ADP + NADP(+) + H(+). In terms of biological role, involved in the regulation of the intracellular balance of NAD and NADP, and is a key enzyme in the biosynthesis of NADP. Catalyzes specifically the phosphorylation on 2'-hydroxyl of the adenosine moiety of NAD to yield NADP. The chain is NAD kinase from Campylobacter jejuni subsp. doylei (strain ATCC BAA-1458 / RM4099 / 269.97).